Reading from the N-terminus, the 114-residue chain is Large ribosomal subunit protein bL19 (114 aa).

This sequence belongs to the bacterial ribosomal protein bL19 family.

Its function is as follows. This protein is located at the 30S-50S ribosomal subunit interface and may play a role in the structure and function of the aminoacyl-tRNA binding site. The polypeptide is Large ribosomal subunit protein bL19 (Halalkalibacterium halodurans (strain ATCC BAA-125 / DSM 18197 / FERM 7344 / JCM 9153 / C-125) (Bacillus halodurans)).